A 503-amino-acid polypeptide reads, in one-letter code: Drimenol monooxygenase (503 aa).

Residues 7-23 traverse the membrane as a helical segment; sequence MICIVVSGLLLYSSRTS. Residue Ser471 coordinates heme.

The protein belongs to the cytochrome P450 family. Heme serves as cofactor.

The protein localises to the membrane. It carries out the reaction (5S,9S,10S)-drim-7-en-11-ol + reduced [NADPH--hemoprotein reductase] + O2 = (5S,10S)-(9R)-7-drimene-11,12-diol + oxidized [NADPH--hemoprotein reductase] + H2O + H(+). Its function is as follows. Catalyzes the conversion of drimenol to drimendiol, a precursor of the sesquiterpenoid polygodial. Polygodial has been shown to be an antifeedant for a number of herbivorous insects. In Persicaria hydropiper (Marshpepper knotweed), this protein is Drimenol monooxygenase.